The sequence spans 64 residues: Small ribosomal subunit protein bS21 (64 aa).

This sequence belongs to the bacterial ribosomal protein bS21 family.

The polypeptide is Small ribosomal subunit protein bS21 (Karelsulcia muelleri (strain GWSS) (Sulcia muelleri)).